We begin with the raw amino-acid sequence, 596 residues long: Actin-related protein 9 (596 aa).

Positions Leu-148–Glu-178 are disordered.

This sequence belongs to the actin family. ARP8 subfamily.

This chain is Actin-related protein 9 (ARP9), found in Arabidopsis thaliana (Mouse-ear cress).